Here is a 230-residue protein sequence, read N- to C-terminus: 6-carboxyhexanoate--CoA ligase (230 aa).

Belongs to the BioW family. Homodimer. Mg(2+) serves as cofactor.

The enzyme catalyses heptanedioate + ATP + CoA = 6-carboxyhexanoyl-CoA + AMP + diphosphate. It participates in metabolic intermediate metabolism; pimeloyl-CoA biosynthesis; pimeloyl-CoA from pimelate: step 1/1. Its function is as follows. Catalyzes the transformation of pimelate into pimeloyl-CoA with concomitant hydrolysis of ATP to AMP. The chain is 6-carboxyhexanoate--CoA ligase from Staphylococcus aureus (strain MSSA476).